Reading from the N-terminus, the 318-residue chain is Methionyl-tRNA formyltransferase (318 aa).

Residue 112–115 (SILP) participates in (6S)-5,6,7,8-tetrahydrofolate binding.

The protein belongs to the Fmt family.

The catalysed reaction is L-methionyl-tRNA(fMet) + (6R)-10-formyltetrahydrofolate = N-formyl-L-methionyl-tRNA(fMet) + (6S)-5,6,7,8-tetrahydrofolate + H(+). Its function is as follows. Attaches a formyl group to the free amino group of methionyl-tRNA(fMet). The formyl group appears to play a dual role in the initiator identity of N-formylmethionyl-tRNA by promoting its recognition by IF2 and preventing the misappropriation of this tRNA by the elongation apparatus. The protein is Methionyl-tRNA formyltransferase of Shewanella baltica (strain OS185).